Consider the following 1077-residue polypeptide: Error-prone DNA polymerase (1077 aa).

The protein belongs to the DNA polymerase type-C family. DnaE2 subfamily.

It localises to the cytoplasm. It carries out the reaction DNA(n) + a 2'-deoxyribonucleoside 5'-triphosphate = DNA(n+1) + diphosphate. Its function is as follows. DNA polymerase involved in damage-induced mutagenesis and translesion synthesis (TLS). It is not the major replicative DNA polymerase. The sequence is that of Error-prone DNA polymerase from Brucella suis biovar 1 (strain 1330).